The following is a 198-amino-acid chain: Lipoprotein signal peptidase (198 aa).

A disordered region spans residues 1–34 (MDDERVSQDPTAENETDAEDRNDDDPSGSAPPQP). The span at 12 to 26 (AENETDAEDRNDDDP) shows a compositional bias: acidic residues. 3 helical membrane passes run 42–62 (LLFVIAGVVLATDLLTKILAV), 92–112 (MATGMTWLLTLVAVGVVIGVV), and 120–140 (SPWWALGLGLVLGGALGNLVD). Residues aspartate 155 and aspartate 169 contribute to the active site. Residues 167–187 (VADSGIVCGAILLVVLTLIGL) form a helical membrane-spanning segment.

The protein belongs to the peptidase A8 family.

The protein resides in the cell membrane. It catalyses the reaction Release of signal peptides from bacterial membrane prolipoproteins. Hydrolyzes -Xaa-Yaa-Zaa-|-(S,diacylglyceryl)Cys-, in which Xaa is hydrophobic (preferably Leu), and Yaa (Ala or Ser) and Zaa (Gly or Ala) have small, neutral side chains.. The protein operates within protein modification; lipoprotein biosynthesis (signal peptide cleavage). Functionally, this protein specifically catalyzes the removal of signal peptides from prolipoproteins. This chain is Lipoprotein signal peptidase, found in Rhodococcus jostii (strain RHA1).